The primary structure comprises 591 residues: MRVSTIRSGRICRLALCLLVLLPLLYLLANWSDHHKRVQEAYHTRFGGPKFAHQRLEGRPREVPKLVDGLGNFEPKDVKPRSGPGENGEAHSLSPDKKHMSDASEMEYGMNIACSDEISMHRSVRDTRLEECRHWDYPFDLPRTSVIIVFHNEGFSVLMRTVHSVIDRSPTHMLHEIILVDDFSDKENLRSQLDEYVLQFKGLVKVIRNKEREGLIRTRSRGAMEATGEVIVFLDAHCEVNTNWLPPLLAPIYRDRTVMTVPIIDGIDHKNFEYRPVYGTDNHFRGIFEWGMLYKENEVPRREQRRRAHNSEPYRSPTHAGGLFAINREYFLELGAYDPGLLVWGGENFELSFKIWQCGGSIEWVPCSRVGHVYRGFMPYNFGKLASKKKGPLITINYKRVIETWFDDTHKEYFYTREPLARYLDMGDISEQLALKKRLNCKSFQWFMDHIAYDVYDKFPGLPANLHWGELRSVASDGCLDSMGHQPPAIMGLTYCHGGGNNQLVRLNAAGQLGVGERCVEADRQGIKLAVCRLGTVDGPWQYNEHTKHLMHRVHKKCMALHPATQQLSLGHCDVNDSYQQWWFKEIRPRW.

Residues 1 to 11 lie on the Cytoplasmic side of the membrane; that stretch reads MRVSTIRSGRI. The chain crosses the membrane as a helical; Signal-anchor for type II membrane protein span at residues 12 to 29; sequence CRLALCLLVLLPLLYLLA. N30 is a glycosylation site (N-linked (GlcNAc...) asparagine). Residues 30-591 lie on the Lumenal side of the membrane; that stretch reads NWSDHHKRVQ…WWFKEIRPRW (562 aa). Residues 68 to 100 form a disordered region; it reads DGLGNFEPKDVKPRSGPGENGEAHSLSPDKKHM. Intrachain disulfides connect C132-C367, C358-C441, C479-C496, C519-C532, and C558-C573. The catalytic subdomain A stretch occupies residues 141–251; sequence LPRTSVIIVF…TNWLPPLLAP (111 aa). 2 residues coordinate substrate: D182 and R212. Mn(2+)-binding residues include D235 and H237. The interval 313 to 375 is catalytic subdomain B; it reads PYRSPTHAGG…PCSRVGHVYR (63 aa). W344 serves as a coordination point for substrate. H372 contacts Mn(2+). R375 and Y380 together coordinate substrate. The Ricin B-type lectin domain occupies 466–585; the sequence is LHWGELRSVA…NDSYQQWWFK (120 aa). The N-linked (GlcNAc...) asparagine glycan is linked to N576.

This sequence belongs to the glycosyltransferase 2 family. GalNAc-T subfamily. Mn(2+) is required as a cofactor. In terms of tissue distribution, expressed in developing oocytes and egg chambers. During embryonic stages 9-11, expressed in the primordium of the foregut, midgut and hindgut. Expressed in the salivary glands from embryonic stage 12 onwards. During embryonic stages 12-13, expressed in the posterior midgut and hindgut. During embryonic stages 14-15, expression continues in the hindgut. During embryonic stages 16-17, expressed in the antennomaxillary complex. In third instar larvae, ubiquitously expressed in wing, with increased expression in the notum and ventral wing pouch, eye-antennal, leg and haltere imaginal disks.

The protein localises to the golgi apparatus membrane. It catalyses the reaction L-seryl-[protein] + UDP-N-acetyl-alpha-D-galactosamine = a 3-O-[N-acetyl-alpha-D-galactosaminyl]-L-seryl-[protein] + UDP + H(+). It carries out the reaction L-threonyl-[protein] + UDP-N-acetyl-alpha-D-galactosamine = a 3-O-[N-acetyl-alpha-D-galactosaminyl]-L-threonyl-[protein] + UDP + H(+). It participates in protein modification; protein glycosylation. In terms of biological role, glycopeptide transferase involved in O-linked oligosaccharide biosynthesis, which catalyzes the transfer of an N-acetyl-D-galactosamine residue to an already glycosylated peptide. In contrast to other proteins of the family, it does not act as a peptide transferase that transfers GalNAc onto serine or threonine residue on the protein receptor, but instead requires the prior addition of a GalNAc on a peptide before adding additional GalNAc moieties. Some peptide transferase activity is however not excluded, considering that its appropriate peptide substrate may remain unidentified. Prefers the monoglycosylated Muc5AC-3 as substrate. Might have a role in protein O-glycosylation in the Golgi and thereby in establishing and/or maintaining a proper secretory apparatus structure. This Drosophila melanogaster (Fruit fly) protein is N-acetylgalactosaminyltransferase 7.